The following is a 226-amino-acid chain: Uracil-DNA glycosylase (226 aa).

The active-site Proton acceptor is the aspartate 64.

The protein belongs to the uracil-DNA glycosylase (UDG) superfamily. UNG family.

Its subcellular location is the cytoplasm. The catalysed reaction is Hydrolyzes single-stranded DNA or mismatched double-stranded DNA and polynucleotides, releasing free uracil.. Excises uracil residues from the DNA which can arise as a result of misincorporation of dUMP residues by DNA polymerase or due to deamination of cytosine. The polypeptide is Uracil-DNA glycosylase (Vibrio campbellii (strain ATCC BAA-1116)).